Here is a 374-residue protein sequence, read N- to C-terminus: Phenoloxidase-activating enzyme 1 (374 aa).

Positions 1 to 19 are cleaved as a signal peptide; it reads MWKSLVFFVSALIWSFGSS. Positions 20-120 are cleaved as a propeptide — activation peptide; it reads QDCTTPTGSR…QCGIDTTGDR (101 aa). The Clip domain occupies 21–74; that stretch reads DCTTPTGSRSNCVSLYQCQPLYNAFEQRPLPTHVVSYLGRSQCGFEGYVPRVCC. 3 disulfide bridges follow: C22/C73, C32/C63, and C38/C74. Residues 83–97 show a composition bias toward polar residues; sequence ATSARPTQAPTQGSS. Residues 83-114 are disordered; sequence ATSARPTQAPTQGSSDVFPEDSSPAPRNQCGI. A Peptidase S1 domain is found at 121 to 370; sequence VYGGTITDLD…YIDWIQNTIA (250 aa). Cysteines 151 and 167 form a disulfide. The active-site Charge relay system is H166. Ca(2+)-binding residues include E186 and D194. D228 (charge relay system) is an active-site residue. 2 cysteine pairs are disulfide-bonded: C292-C307 and C317-C346. S321 serves as the catalytic Charge relay system.

This sequence belongs to the peptidase S1 family. CLIP subfamily. Post-translationally, activated by the removal of the N-terminal inhibitory propeptide. As to expression, expressed in hemocytes.

It localises to the secreted. Inhibited by aprotenin. Not inhibited by EDTA, PMSF or leupeptin. Its function is as follows. Serine protease which, by cleaving and activating prophenoloxidase (PPO1) after immune challenge, plays an essential role in the melanization immune response to wounding. The chain is Phenoloxidase-activating enzyme 1 from Spodoptera litura (Asian cotton leafworm).